A 236-amino-acid chain; its full sequence is Uridylate kinase (236 aa).

ATP is bound at residue 10–13; it reads KLSG. Gly52 serves as a coordination point for UMP. Residues Gly53 and Arg57 each contribute to the ATP site. UMP contacts are provided by residues Asp72 and 133-140; that span reads TGNPFFTT. Residues Thr160, Tyr166, and Asp169 each contribute to the ATP site.

The protein belongs to the UMP kinase family. In terms of assembly, homohexamer.

Its subcellular location is the cytoplasm. The enzyme catalyses UMP + ATP = UDP + ADP. It functions in the pathway pyrimidine metabolism; CTP biosynthesis via de novo pathway; UDP from UMP (UMPK route): step 1/1. With respect to regulation, inhibited by UTP. Catalyzes the reversible phosphorylation of UMP to UDP. This Polaromonas sp. (strain JS666 / ATCC BAA-500) protein is Uridylate kinase.